The sequence spans 51 residues: Glutamate dehydrogenase (51 aa).

Position 31 (K31) interacts with substrate.

Belongs to the Glu/Leu/Phe/Val dehydrogenases family. As to quaternary structure, homohexamer.

It localises to the mitochondrion matrix. The catalysed reaction is L-glutamate + NAD(+) + H2O = 2-oxoglutarate + NH4(+) + NADH + H(+). The enzyme catalyses L-glutamate + NADP(+) + H2O = 2-oxoglutarate + NH4(+) + NADPH + H(+). In terms of biological role, mitochondrial glutamate dehydrogenase that converts L-glutamate into alpha-ketoglutarate. Plays a key role in glutamine anaplerosis by producing alpha-ketoglutarate, an important intermediate in the tricarboxylic acid cycle. The sequence is that of Glutamate dehydrogenase from Electrophorus electricus (Electric eel).